The primary structure comprises 177 residues: ATP synthase subunit delta (177 aa).

Belongs to the ATPase delta chain family. As to quaternary structure, F-type ATPases have 2 components, F(1) - the catalytic core - and F(0) - the membrane proton channel. F(1) has five subunits: alpha(3), beta(3), gamma(1), delta(1), epsilon(1). F(0) has three main subunits: a(1), b(2) and c(10-14). The alpha and beta chains form an alternating ring which encloses part of the gamma chain. F(1) is attached to F(0) by a central stalk formed by the gamma and epsilon chains, while a peripheral stalk is formed by the delta and b chains.

It is found in the cell inner membrane. Functionally, f(1)F(0) ATP synthase produces ATP from ADP in the presence of a proton or sodium gradient. F-type ATPases consist of two structural domains, F(1) containing the extramembraneous catalytic core and F(0) containing the membrane proton channel, linked together by a central stalk and a peripheral stalk. During catalysis, ATP synthesis in the catalytic domain of F(1) is coupled via a rotary mechanism of the central stalk subunits to proton translocation. Its function is as follows. This protein is part of the stalk that links CF(0) to CF(1). It either transmits conformational changes from CF(0) to CF(1) or is implicated in proton conduction. This chain is ATP synthase subunit delta, found in Haemophilus influenzae (strain PittEE).